The primary structure comprises 314 residues: Splicing factor YJU2 (314 aa).

Residues cysteine 43, cysteine 46, cysteine 80, and cysteine 83 each contribute to the Zn(2+) site. Disordered regions lie at residues 178–238 (MSQE…NEVP) and 253–314 (LAGL…DSDS). Residues 200 to 209 (EEARHRRLLE) show a composition bias toward basic and acidic residues. 3 positions are modified to phosphoserine: serine 211, serine 213, and serine 220. Low complexity predominate over residues 222–232 (PRAAARPNPTA). Positions 290 to 302 (PTPQTPGTSSLSQ) are enriched in polar residues. Residues serine 309, serine 312, and serine 314 each carry the phosphoserine modification.

The protein belongs to the CWC16 family. YJU2 subfamily. As to quaternary structure, component of the spliceosome. Present in the activated B complex, the catalytically activated B* complex which catalyzes the branching, the catalytic step 1 C complex catalyzing the exon ligation, and the postcatalytic P complex containing the ligated exons (mRNA) and the excised lariat intron.

It is found in the nucleus. Part of the spliceosome which catalyzes two sequential transesterification reactions, first the excision of the non-coding intron from pre-mRNA and then the ligation of the coding exons to form the mature mRNA. Plays a role in stabilizing the structure of the spliceosome catalytic core and docking of the branch helix into the active site, producing 5'-exon and lariat intron-3'-intermediates. May protect cells from TP53-dependent apoptosis upon dsDNA break damage through association with PRP19-CD5L complex. The chain is Splicing factor YJU2 from Mus musculus (Mouse).